A 150-amino-acid polypeptide reads, in one-letter code: 3-hydroxyacyl-[acyl-carrier-protein] dehydratase FabZ (150 aa).

His-51 is an active-site residue.

The protein belongs to the thioester dehydratase family. FabZ subfamily.

It is found in the cytoplasm. It carries out the reaction a (3R)-hydroxyacyl-[ACP] = a (2E)-enoyl-[ACP] + H2O. In terms of biological role, involved in unsaturated fatty acids biosynthesis. Catalyzes the dehydration of short chain beta-hydroxyacyl-ACPs and long chain saturated and unsaturated beta-hydroxyacyl-ACPs. The sequence is that of 3-hydroxyacyl-[acyl-carrier-protein] dehydratase FabZ from Rubrobacter xylanophilus (strain DSM 9941 / JCM 11954 / NBRC 16129 / PRD-1).